The primary structure comprises 66 residues: Beta-toxin Ct71 (66 aa).

Positions 1-66 (KEGYIVNYHD…VWPLPKKTCN (66 aa)) constitute an LCN-type CS-alpha/beta domain. 4 cysteine pairs are disulfide-bonded: C12–C65, C16–C41, C25–C46, and C29–C48. At N66 the chain carries Asparagine amide.

It belongs to the long (4 C-C) scorpion toxin superfamily. Sodium channel inhibitor family. Beta subfamily. As to expression, expressed by the venom gland.

It localises to the secreted. Beta toxins bind voltage-independently at site-4 of sodium channels (Nav) and shift the voltage of activation toward more negative potentials thereby affecting sodium channel activation and promoting spontaneous and repetitive firing. Lethal to mice. This Centruroides tecomanus (Scorpion) protein is Beta-toxin Ct71.